Here is an 82-residue protein sequence, read N- to C-terminus: Putative membrane protein insertion efficiency factor (82 aa).

The disordered stretch occupies residues 61–82; the sequence is HEGGYDPVPKRKNKNSEGKREE.

Belongs to the UPF0161 family.

The protein resides in the cell inner membrane. Could be involved in insertion of integral membrane proteins into the membrane. The protein is Putative membrane protein insertion efficiency factor of Fusobacterium nucleatum subsp. nucleatum (strain ATCC 25586 / DSM 15643 / BCRC 10681 / CIP 101130 / JCM 8532 / KCTC 2640 / LMG 13131 / VPI 4355).